The sequence spans 321 residues: Olfactory receptor 5K4 (321 aa).

Residues M1–T25 lie on the Extracellular side of the membrane. An N-linked (GlcNAc...) asparagine glycan is attached at N5. Residues L26–V46 traverse the membrane as a helical segment. The Cytoplasmic portion of the chain corresponds to A47–R54. The helical transmembrane segment at L55–C75 threads the bilayer. At A76–C97 the chain is on the extracellular side. C97 and C179 are disulfide-bonded. The helical transmembrane segment at M98–M118 threads the bilayer. The Cytoplasmic portion of the chain corresponds to A119–T139. The helical transmembrane segment at L140–V160 threads the bilayer. Topologically, residues G161 to P205 are extracellular. A helical membrane pass occupies residues I206–F226. Residues K227 to T240 are Cytoplasmic-facing. The helical transmembrane segment at C241–P261 threads the bilayer. Topologically, residues S262–D268 are extracellular. The chain crosses the membrane as a helical span at residues T269 to L289. At R290–Y321 the chain is on the cytoplasmic side.

Belongs to the G-protein coupled receptor 1 family.

The protein localises to the cell membrane. Functionally, odorant receptor. In Homo sapiens (Human), this protein is Olfactory receptor 5K4 (OR5K4).